The following is a 197-amino-acid chain: Lipoprotein LprI (197 aa).

Positions 1 to 15 (MRWIGVLVTALVLSA) are cleaved as a signal peptide. Cys16 carries N-palmitoyl cysteine lipidation. Residue Cys16 is the site of S-diacylglycerol cysteine attachment.

The protein in the C-terminal section; belongs to the MliC family. In terms of assembly, probably a homodimer. Post-translationally, glycosylated.

It localises to the cell membrane. The protein resides in the secreted. It is found in the cell wall. The protein localises to the cell surface. Strongly binds and inhibits lysozyme, may help bacteria survive in lysozyme-producing host cells such as monocyte-derived macrophages. The sequence is that of Lipoprotein LprI (lprI) from Mycobacterium bovis (strain ATCC BAA-935 / AF2122/97).